The sequence spans 238 residues: Urease subunit alpha (238 aa).

Positions 1 to 102 (MKLTPKELDK…LVTVHTPIES (102 aa)) are urease gamma. Residues 103 to 238 (KGKLVPGELF…DDNYVKTIKE (136 aa)) form a urease beta region.

This sequence in the N-terminal section; belongs to the urease gamma subunit family. In the C-terminal section; belongs to the urease beta subunit family. As to quaternary structure, heterohexamer of 3 UreA (alpha) and 3 UreB (beta) subunits.

The protein resides in the cytoplasm. It catalyses the reaction urea + 2 H2O + H(+) = hydrogencarbonate + 2 NH4(+). It participates in nitrogen metabolism; urea degradation; CO(2) and NH(3) from urea (urease route): step 1/1. The chain is Urease subunit alpha from Helicobacter acinonychis (strain Sheeba).